The following is a 157-amino-acid chain: 6,7-dimethyl-8-ribityllumazine synthase (157 aa).

Residues Phe-22, Ala-57–Glu-59, and Thr-81–Ile-83 each bind 5-amino-6-(D-ribitylamino)uracil. Gly-86–Thr-87 is a binding site for (2S)-2-hydroxy-3-oxobutyl phosphate. His-89 functions as the Proton donor in the catalytic mechanism. Phe-114 is a 5-amino-6-(D-ribitylamino)uracil binding site. Arg-128 contacts (2S)-2-hydroxy-3-oxobutyl phosphate.

Belongs to the DMRL synthase family. Forms an icosahedral capsid composed of 60 subunits, arranged as a dodecamer of pentamers.

The catalysed reaction is (2S)-2-hydroxy-3-oxobutyl phosphate + 5-amino-6-(D-ribitylamino)uracil = 6,7-dimethyl-8-(1-D-ribityl)lumazine + phosphate + 2 H2O + H(+). It functions in the pathway cofactor biosynthesis; riboflavin biosynthesis; riboflavin from 2-hydroxy-3-oxobutyl phosphate and 5-amino-6-(D-ribitylamino)uracil: step 1/2. Its function is as follows. Catalyzes the formation of 6,7-dimethyl-8-ribityllumazine by condensation of 5-amino-6-(D-ribitylamino)uracil with 3,4-dihydroxy-2-butanone 4-phosphate. This is the penultimate step in the biosynthesis of riboflavin. The polypeptide is 6,7-dimethyl-8-ribityllumazine synthase (Histophilus somni (strain 129Pt) (Haemophilus somnus)).